The sequence spans 512 residues: Methionine--tRNA ligase (512 aa).

The short motif at 12 to 22 (YYVNDVPHIGH) is the 'HIGH' region element. Positions 295–299 (KISKS) match the 'KMSKS' region motif. Lysine 298 provides a ligand contact to ATP.

This sequence belongs to the class-I aminoacyl-tRNA synthetase family. MetG type 2B subfamily. In terms of assembly, monomer.

It localises to the cytoplasm. It catalyses the reaction tRNA(Met) + L-methionine + ATP = L-methionyl-tRNA(Met) + AMP + diphosphate. Is required not only for elongation of protein synthesis but also for the initiation of all mRNA translation through initiator tRNA(fMet) aminoacylation. The protein is Methionine--tRNA ligase of Rickettsia felis (strain ATCC VR-1525 / URRWXCal2) (Rickettsia azadi).